The sequence spans 147 residues: SsrA-binding protein (147 aa).

Residues 119 to 147 (AKGKKQHDKRESEKQKEWERDKQRLMRPK) form a disordered region. Over residues 126–147 (DKRESEKQKEWERDKQRLMRPK) the composition is skewed to basic and acidic residues.

It belongs to the SmpB family.

The protein resides in the cytoplasm. In terms of biological role, required for rescue of stalled ribosomes mediated by trans-translation. Binds to transfer-messenger RNA (tmRNA), required for stable association of tmRNA with ribosomes. tmRNA and SmpB together mimic tRNA shape, replacing the anticodon stem-loop with SmpB. tmRNA is encoded by the ssrA gene; the 2 termini fold to resemble tRNA(Ala) and it encodes a 'tag peptide', a short internal open reading frame. During trans-translation Ala-aminoacylated tmRNA acts like a tRNA, entering the A-site of stalled ribosomes, displacing the stalled mRNA. The ribosome then switches to translate the ORF on the tmRNA; the nascent peptide is terminated with the 'tag peptide' encoded by the tmRNA and targeted for degradation. The ribosome is freed to recommence translation, which seems to be the essential function of trans-translation. The protein is SsrA-binding protein of Nitrosospira multiformis (strain ATCC 25196 / NCIMB 11849 / C 71).